A 244-amino-acid chain; its full sequence is Small ribosomal subunit protein eS4 (244 aa).

The segment covering 1-14 (MANKGPRKHLKRLP) has biased composition (basic residues). Residues 1–36 (MANKGPRKHLKRLPAPKNWQISRKTNKYTTRPSAGP) form a disordered region. A compositionally biased stretch (polar residues) spans 19-32 (WQISRKTNKYTTRP). The S4 RNA-binding domain occupies 43-106 (LPLLLVLRDL…NESFLVVLDE (64 aa)).

Belongs to the eukaryotic ribosomal protein eS4 family.

The sequence is that of Small ribosomal subunit protein eS4 from Methanococcus aeolicus (strain ATCC BAA-1280 / DSM 17508 / OCM 812 / Nankai-3).